Here is a 559-residue protein sequence, read N- to C-terminus: MSSRAAVFILNQNAKREQGRKAQTANIKAARAVSDIVRTTLGPKSMLKMLLDPMGGIVLTNDGNAILREIDVAHPAAKSMIELARAQDEEVGDGTTSVIILAGEILSAVESFLERDIHPTVIVGAYFQALEEIVRLTESYGEPIDIENENDLQKIVSSCIGTKFSSKWGNLIVDLAVKAVKSVYKKEGDYVEIDVKRYAKVEKIPGGLLEESVVLDGVMFNKDVTHPGMRRYIENPRVVLLDCPLEYKKGESMTNMEFTKEEDFKKALMMEEEEVKKMCAEDILRVKPDVVITEKGVSDTAQHFLLKYGNCTVIRRIRKTDNNRIARVTGATIANRPEELQESDVGTKCGLFEIKKIGDEYFSFMTKCENPKACSILLRGASKDVLNEIERNLHDALGVARNVMVNPKLVPGGGAIEMELACRLMEFSQKIEGMQQWPFKALAGALEVIPRTLAQNCGADVVRVMTELRAKHANDKEGLYWGIDGNTGKIRDMRESNVWDPISVKQQTLKTSIEATCMLLRIDDIVSGIKKDKRGGAGQRGGDRGQGDQEETFGDQRDG.

A disulfide bridge links cysteine 368 with cysteine 374. The interval 531 to 559 (KDKRGGAGQRGGDRGQGDQEETFGDQRDG) is disordered.

The protein belongs to the TCP-1 chaperonin family. Heterooligomeric complex of about 850 to 900 kDa that forms two stacked rings, 12 to 16 nm in diameter.

It is found in the cytoplasm. Molecular chaperone; assists the folding of proteins upon ATP hydrolysis. Known to play a role, in vitro, in the folding of actin and tubulin. The protein is T-complex protein 1 subunit gamma of Oxytricha granulifera (Ciliate).